The sequence spans 204 residues: Recombination protein RecR (204 aa).

The segment at 58–75 (CSICQNVTDRDADPCRIC) adopts a C4-type zinc-finger fold. Residues 83 to 181 (SVICVVESPV…MVTKIARGIP (99 aa)) enclose the Toprim domain.

The protein belongs to the RecR family.

Its function is as follows. May play a role in DNA repair. It seems to be involved in an RecBC-independent recombinational process of DNA repair. It may act with RecF and RecO. The sequence is that of Recombination protein RecR from Chlorobium phaeovibrioides (strain DSM 265 / 1930) (Prosthecochloris vibrioformis (strain DSM 265)).